The sequence spans 842 residues: Alpha-glucan phosphorylase, H isozyme (842 aa).

Lys688 is modified (N6-(pyridoxal phosphate)lysine).

It belongs to the glycogen phosphorylase family. It depends on pyridoxal 5'-phosphate as a cofactor.

Its subcellular location is the cytoplasm. It carries out the reaction [(1-&gt;4)-alpha-D-glucosyl](n) + phosphate = [(1-&gt;4)-alpha-D-glucosyl](n-1) + alpha-D-glucose 1-phosphate. Phosphorylase is an important allosteric enzyme in carbohydrate metabolism. Enzymes from different sources differ in their regulatory mechanisms and in their natural substrates. However, all known phosphorylases share catalytic and structural properties. Functionally, the H isoform exhibits higher affinity for branched polyglucans such as soluble starch or glycogen. This is Alpha-glucan phosphorylase, H isozyme from Vicia faba (Broad bean).